We begin with the raw amino-acid sequence, 398 residues long: 1-deoxy-D-xylulose 5-phosphate reductoisomerase (398 aa).

NADPH is bound by residues T10, G11, S12, I13, G36, R37, N38, and N124. K125 is a binding site for 1-deoxy-D-xylulose 5-phosphate. NADPH is bound at residue E126. A Mn(2+)-binding site is contributed by D150. The 1-deoxy-D-xylulose 5-phosphate site is built by S151, E152, S186, and H209. Mn(2+) is bound at residue E152. NADPH is bound at residue G215. S222, N227, K228, and E231 together coordinate 1-deoxy-D-xylulose 5-phosphate. E231 lines the Mn(2+) pocket.

Belongs to the DXR family. Homodimer. Mg(2+) is required as a cofactor. Requires Mn(2+) as cofactor.

It catalyses the reaction 2-C-methyl-D-erythritol 4-phosphate + NADP(+) = 1-deoxy-D-xylulose 5-phosphate + NADPH + H(+). It participates in isoprenoid biosynthesis; isopentenyl diphosphate biosynthesis via DXP pathway; isopentenyl diphosphate from 1-deoxy-D-xylulose 5-phosphate: step 1/6. Functionally, catalyzes the NADPH-dependent rearrangement and reduction of 1-deoxy-D-xylulose-5-phosphate (DXP) to 2-C-methyl-D-erythritol 4-phosphate (MEP). This chain is 1-deoxy-D-xylulose 5-phosphate reductoisomerase, found in Yersinia enterocolitica serotype O:8 / biotype 1B (strain NCTC 13174 / 8081).